The following is an 84-amino-acid chain: Small ribosomal subunit protein bS20 (84 aa).

The protein belongs to the bacterial ribosomal protein bS20 family.

Functionally, binds directly to 16S ribosomal RNA. The polypeptide is Small ribosomal subunit protein bS20 (Bacteroides thetaiotaomicron (strain ATCC 29148 / DSM 2079 / JCM 5827 / CCUG 10774 / NCTC 10582 / VPI-5482 / E50)).